Here is a 399-residue protein sequence, read N- to C-terminus: MADGIDRRADDKMEFNTSKEVTVAPTFEDMHLKESLLRGIYAYGYESPSAVQSRAIVQICKGRDTIAQAQSGTGKTATFSISALQVIDTVVRETQALVLSPTRELATQIQSVIMALGDYMNVQCHACIGGTNIGEDIRKLDYGQHVVSGTPGRVADMIRRRHLRTRHIKMLVLDEADELLNRGFREQIYDVYRYLPPATQVVVVSATLPYDVLDMTTKFMTDPVRVLVKRDELTLEGIKQYFIAVEKEEWKFDTLCDLYDTLTITQAVIFCNTRRKVDWLTDKMREANFTVSSMHGEMPQKERDSIMQDFRQGNSRVLISTDVWARGIDVQQVSLVINYDLPTNRENYIHRIGRSGRFGRKGVAINFVTSDDVRILRDIELYYSTQIDEMPMNVADLLS.

The short motif at 25 to 53 (PTFEDMHLKESLLRGIYAYGYESPSAVQS) is the Q motif element. Residues 56–226 (IVQICKGRDT…TKFMTDPVRV (171 aa)) form the Helicase ATP-binding domain. 69–76 (AQSGTGKT) lines the ATP pocket. A DEAD box motif is present at residues 174-177 (DEAD). One can recognise a Helicase C-terminal domain in the interval 237-398 (GIKQYFIAVE…EMPMNVADLL (162 aa)).

It belongs to the DEAD box helicase family. DDX48/FAL1 subfamily.

The protein resides in the nucleus. The protein localises to the nucleolus. It catalyses the reaction ATP + H2O = ADP + phosphate + H(+). Functionally, ATP-dependent RNA helicase involved in 40S ribosomal subunit biogenesis. Required for the processing and cleavage of 35S pre-rRNA at sites A0, A1, and A2, leading to mature 18S rRNA. This chain is ATP-dependent RNA helicase fal1 (fal1), found in Emericella nidulans (strain FGSC A4 / ATCC 38163 / CBS 112.46 / NRRL 194 / M139) (Aspergillus nidulans).